Consider the following 236-residue polypeptide: Enolase-phosphatase E1 (236 aa).

The protein belongs to the HAD-like hydrolase superfamily. MasA/MtnC family. As to quaternary structure, monomer. Mg(2+) serves as cofactor.

It carries out the reaction 5-methylsulfanyl-2,3-dioxopentyl phosphate + H2O = 1,2-dihydroxy-5-(methylsulfanyl)pent-1-en-3-one + phosphate. Its pathway is amino-acid biosynthesis; L-methionine biosynthesis via salvage pathway; L-methionine from S-methyl-5-thio-alpha-D-ribose 1-phosphate: step 3/6. It functions in the pathway amino-acid biosynthesis; L-methionine biosynthesis via salvage pathway; L-methionine from S-methyl-5-thio-alpha-D-ribose 1-phosphate: step 4/6. Its function is as follows. Bifunctional enzyme that catalyzes the enolization of 2,3-diketo-5-methylthiopentyl-1-phosphate (DK-MTP-1-P) into the intermediate 2-hydroxy-3-keto-5-methylthiopentenyl-1-phosphate (HK-MTPenyl-1-P), which is then dephosphorylated to form the acireductone 1,2-dihydroxy-3-keto-5-methylthiopentene (DHK-MTPene). The sequence is that of Enolase-phosphatase E1 from Frankia alni (strain DSM 45986 / CECT 9034 / ACN14a).